Consider the following 385-residue polypeptide: Bifunctional chorismate mutase/prephenate dehydratase (385 aa).

Residues 1-92 (MPANNSLLIF…ESVATQKKLL (92 aa)) enclose the Chorismate mutase domain. Substrate is bound by residues R11, R28, K39, D48, E52, S84, and Q88. A Prephenate dehydratase domain is found at 105-285 (NFSFLGPKGS…NITRFILLNR (181 aa)). Positions 286–385 (NPKKISKNIP…PSEKITPIAP (100 aa)) are regulatory. The region spanning 299-376 (TLIFTTGQEA…RFIKILGCYP (78 aa)) is the ACT domain.

The protein localises to the cytoplasm. It carries out the reaction chorismate = prephenate. The catalysed reaction is prephenate + H(+) = 3-phenylpyruvate + CO2 + H2O. It participates in amino-acid biosynthesis; L-phenylalanine biosynthesis; phenylpyruvate from prephenate: step 1/1. The protein operates within metabolic intermediate biosynthesis; prephenate biosynthesis; prephenate from chorismate: step 1/1. Catalyzes the Claisen rearrangement of chorismate to prephenate and the decarboxylation/dehydration of prephenate to phenylpyruvate. This is Bifunctional chorismate mutase/prephenate dehydratase (pheA) from Buchnera aphidicola subsp. Acyrthosiphon pisum (strain APS) (Acyrthosiphon pisum symbiotic bacterium).